Consider the following 523-residue polypeptide: ATP synthase subunit alpha (523 aa).

Residue glycine 179–threonine 186 participates in ATP binding.

Belongs to the ATPase alpha/beta chains family. F-type ATPases have 2 components, CF(1) - the catalytic core - and CF(0) - the membrane proton channel. CF(1) has five subunits: alpha(3), beta(3), gamma(1), delta(1), epsilon(1). CF(0) has three main subunits: a(1), b(2) and c(9-12). The alpha and beta chains form an alternating ring which encloses part of the gamma chain. CF(1) is attached to CF(0) by a central stalk formed by the gamma and epsilon chains, while a peripheral stalk is formed by the delta and b chains.

It is found in the cell inner membrane. The catalysed reaction is ATP + H2O + 4 H(+)(in) = ADP + phosphate + 5 H(+)(out). In terms of biological role, produces ATP from ADP in the presence of a proton gradient across the membrane. The alpha chain is a regulatory subunit. This chain is ATP synthase subunit alpha, found in Vibrio vulnificus (strain YJ016).